A 194-amino-acid polypeptide reads, in one-letter code: Probable molybdenum cofactor guanylyltransferase (194 aa).

Residues 8–10 (LAG), Lys20, and Asp99 contribute to the GTP site. Residue Asp99 participates in Mg(2+) binding.

Belongs to the MobA family. It depends on Mg(2+) as a cofactor.

Its subcellular location is the cytoplasm. It catalyses the reaction Mo-molybdopterin + GTP + H(+) = Mo-molybdopterin guanine dinucleotide + diphosphate. Transfers a GMP moiety from GTP to Mo-molybdopterin (Mo-MPT) cofactor (Moco or molybdenum cofactor) to form Mo-molybdopterin guanine dinucleotide (Mo-MGD) cofactor. The sequence is that of Probable molybdenum cofactor guanylyltransferase from Synechococcus elongatus (strain ATCC 33912 / PCC 7942 / FACHB-805) (Anacystis nidulans R2).